A 154-amino-acid polypeptide reads, in one-letter code: Cytochrome c-type biogenesis protein CcmE (154 aa).

Residues 1–8 (MTPQRKRR) are Cytoplasmic-facing. A helical; Signal-anchor for type II membrane protein membrane pass occupies residues 9–29 (LVMLAALAGGVGVAVALALAA). Residues 30-154 (LQQNINLFYS…GGTPAAEPQP (125 aa)) lie on the Periplasmic side of the membrane. Residues His-124 and Tyr-128 each contribute to the heme site. The interval 130-154 (PPEAAHALKQGAATSGGTPAAEPQP) is disordered.

Belongs to the CcmE/CycJ family.

It is found in the cell inner membrane. Heme chaperone required for the biogenesis of c-type cytochromes. Transiently binds heme delivered by CcmC and transfers the heme to apo-cytochromes in a process facilitated by CcmF and CcmH. The polypeptide is Cytochrome c-type biogenesis protein CcmE (Bordetella petrii (strain ATCC BAA-461 / DSM 12804 / CCUG 43448)).